A 77-amino-acid polypeptide reads, in one-letter code: ATP synthase subunit c (77 aa).

A run of 2 helical transmembrane segments spans residues 13 to 33 (IATV…GIVA) and 55 to 75 (FLGI…YFIF).

It belongs to the ATPase C chain family. As to quaternary structure, F-type ATPases have 2 components, F(1) - the catalytic core - and F(0) - the membrane proton channel. F(1) has five subunits: alpha(3), beta(3), gamma(1), delta(1), epsilon(1). F(0) has three main subunits: a(1), b(2) and c(10-14). The alpha and beta chains form an alternating ring which encloses part of the gamma chain. F(1) is attached to F(0) by a central stalk formed by the gamma and epsilon chains, while a peripheral stalk is formed by the delta and b chains.

It localises to the cell membrane. Its function is as follows. F(1)F(0) ATP synthase produces ATP from ADP in the presence of a proton or sodium gradient. F-type ATPases consist of two structural domains, F(1) containing the extramembraneous catalytic core and F(0) containing the membrane proton channel, linked together by a central stalk and a peripheral stalk. During catalysis, ATP synthesis in the catalytic domain of F(1) is coupled via a rotary mechanism of the central stalk subunits to proton translocation. Functionally, key component of the F(0) channel; it plays a direct role in translocation across the membrane. A homomeric c-ring of between 10-14 subunits forms the central stalk rotor element with the F(1) delta and epsilon subunits. This is ATP synthase subunit c from Clavibacter sepedonicus (Clavibacter michiganensis subsp. sepedonicus).